The sequence spans 654 residues: DNA-directed RNA polymerase III subunit RPC3 (654 aa).

A Phosphothreonine modification is found at Thr27. Disordered stretches follow at residues 381-401 (LSRK…ASLP) and 422-448 (KSLQ…EDPH). 2 positions are modified to phosphoserine: Ser392 and Ser394. The span at 429–444 (DTQEEDEEEEDLDADT) shows a compositional bias: acidic residues. Residues 581 to 602 (LEWNMANLLFKKEKLKQENSTL) are leucine-zipper.

It belongs to the eukaryotic RPC3/POLR3C RNA polymerase subunit family. In terms of assembly, component of the RNA polymerase III (Pol III) complex consisting of 17 subunits.

Its subcellular location is the cytoplasm. It localises to the nucleus. DNA-dependent RNA polymerase catalyzes the transcription of DNA into RNA using the four ribonucleoside triphosphates as substrates. Specific core component of RNA polymerase III which synthesizes small RNAs, such as 5S rRNA and tRNAs. The polypeptide is DNA-directed RNA polymerase III subunit RPC3 (RPC82) (Saccharomyces cerevisiae (strain ATCC 204508 / S288c) (Baker's yeast)).